A 284-amino-acid polypeptide reads, in one-letter code: Bifunctional protein FolD (284 aa).

NADP(+)-binding positions include 166–168 (GAS), serine 191, and isoleucine 232.

Belongs to the tetrahydrofolate dehydrogenase/cyclohydrolase family. As to quaternary structure, homodimer.

It carries out the reaction (6R)-5,10-methylene-5,6,7,8-tetrahydrofolate + NADP(+) = (6R)-5,10-methenyltetrahydrofolate + NADPH. The catalysed reaction is (6R)-5,10-methenyltetrahydrofolate + H2O = (6R)-10-formyltetrahydrofolate + H(+). Its pathway is one-carbon metabolism; tetrahydrofolate interconversion. In terms of biological role, catalyzes the oxidation of 5,10-methylenetetrahydrofolate to 5,10-methenyltetrahydrofolate and then the hydrolysis of 5,10-methenyltetrahydrofolate to 10-formyltetrahydrofolate. This chain is Bifunctional protein FolD, found in Neisseria meningitidis serogroup C (strain 053442).